The sequence spans 502 residues: Sodium/proline symporter (502 aa).

13 consecutive transmembrane segments (helical) span residues 6 to 26, 42 to 62, 68 to 88, 127 to 147, 163 to 183, 192 to 212, 235 to 255, 276 to 296, 320 to 340, 371 to 391, 398 to 418, 430 to 450, and 452 to 472; these read PMLVTFCVYIFGMILIGFIAW, LGPFVTALSAGASDMSGWLLM, IFLSGISESWIAIGLTLGAWI, IISALVILLFFTIYCASGIVA, ALWAGAAATIIYTFIGGFLAV, SLMIFALILTPVMVIVGVGGF, FVAIISLMGWGLGYFGQPHIL, TWMILCLAGAVAVGFFGIAYF, ILFNPWIAGVLLSAILAAVMS, LVWVGRVMVLVVALIAIALAA, LGLVSYAWAGFGAAFGPVVLF, ALAGMIIGAVTVIVWKQYGWL, and LYEIIPGFIFGSLGIVIFSLL.

It belongs to the sodium:solute symporter (SSF) (TC 2.A.21) family.

The protein localises to the cell inner membrane. It catalyses the reaction L-proline(in) + Na(+)(in) = L-proline(out) + Na(+)(out). In terms of biological role, catalyzes the sodium-dependent uptake of extracellular L-proline. In Salmonella typhimurium (strain LT2 / SGSC1412 / ATCC 700720), this protein is Sodium/proline symporter.